The chain runs to 303 residues: Probable 5-dehydro-4-deoxyglucarate dehydratase (303 aa).

Belongs to the DapA family.

It carries out the reaction 5-dehydro-4-deoxy-D-glucarate + H(+) = 2,5-dioxopentanoate + CO2 + H2O. The protein operates within carbohydrate acid metabolism; D-glucarate degradation; 2,5-dioxopentanoate from D-glucarate: step 2/2. This is Probable 5-dehydro-4-deoxyglucarate dehydratase from Pseudomonas putida (strain GB-1).